The following is a 173-amino-acid chain: RNA pyrophosphohydrolase (173 aa).

Residues 11–164 (PYRRCVGVVV…KKHVYRKVVS (154 aa)) form the Nudix hydrolase domain. Positions 52 to 73 (GGIDEGEEPLDAACRELYEETG) match the Nudix box motif.

This sequence belongs to the Nudix hydrolase family. RppH subfamily. It depends on a divalent metal cation as a cofactor.

In terms of biological role, accelerates the degradation of transcripts by removing pyrophosphate from the 5'-end of triphosphorylated RNA, leading to a more labile monophosphorylated state that can stimulate subsequent ribonuclease cleavage. The chain is RNA pyrophosphohydrolase from Bartonella quintana (strain Toulouse) (Rochalimaea quintana).